A 616-amino-acid chain; its full sequence is DNA-binding protein RFX5 (616 aa).

The segment at 1 to 29 (MAEDEPDAKSPKTGGRAPPGGAEAGEPTT) is disordered. At Ala2 the chain carries N-acetylalanine. Position 10 is a phosphoserine (Ser10). Low complexity predominate over residues 13–29 (TGGRAPPGGAEAGEPTT). Residues 25 to 90 (GEPTTLLQRL…PSTLSNEEYM (66 aa)) form an N-terminal domain region. The segment at 62–66 (LYLYL) is leucine-rich region; critical for dimer formation and for interaction with RFXAP. Residues 92-168 (AYRWIRNHLE…YCYSGIRRKT (77 aa)) constitute a DNA-binding region (RFX-type winged-helix). The short motif at 173–178 (PPLPGL) is the PxLPxI/L motif; mediates interaction with RFXANK element. Ser185 carries the phosphoserine modification. Disordered stretches follow at residues 252–314 (AEED…ESSA) and 391–616 (LPGP…ATPP). Residues 276–293 (GAHKKPERLAQPPKDLEA) are compositionally biased toward basic and acidic residues. Over residues 391-401 (LPGPGPGPGRA) the composition is skewed to pro residues. The segment covering 424-434 (GPHDKGVKRTA) has biased composition (basic and acidic residues). Over residues 463-473 (KRKRGRPRKKS) the composition is skewed to basic residues. A compositionally biased stretch (gly residues) spans 534–546 (QGDGTVSKGGRGP). Positions 606–616 (QEHKDPKATPP) are enriched in basic and acidic residues.

Belongs to the RFX family. In terms of assembly, homodimer. The RFX heterotetrameric complex consists of 2 molecules of RFX5 and one each of RFXAP and RFX-B/RFXANK; with each subunit representing a separate complementation group. Interacts (via PxLPxI/L motif) with RFXANK (via ankyrin repeats); the interaction is direct. RFX forms cooperative DNA binding complexes with X2BP and CBF/NF-Y. RFX associates with CIITA to form an active transcriptional complex. Phosphorylated. Ubiquitous.

The protein resides in the nucleus. In terms of biological role, activates transcription from class II MHC promoters. Recognizes X-boxes. Mediates cooperative binding between RFX and NF-Y. RFX binds the X1 box of MHC-II promoters. The sequence is that of DNA-binding protein RFX5 (RFX5) from Homo sapiens (Human).